A 156-amino-acid chain; its full sequence is Small ribosomal subunit protein uS7 (156 aa).

Belongs to the universal ribosomal protein uS7 family. Part of the 30S ribosomal subunit. Contacts proteins S9 and S11.

In terms of biological role, one of the primary rRNA binding proteins, it binds directly to 16S rRNA where it nucleates assembly of the head domain of the 30S subunit. Is located at the subunit interface close to the decoding center, probably blocks exit of the E-site tRNA. In Klebsiella pneumoniae (strain 342), this protein is Small ribosomal subunit protein uS7.